A 238-amino-acid chain; its full sequence is Sugar fermentation stimulation protein homolog (238 aa).

Belongs to the SfsA family.

In Haemophilus influenzae (strain PittGG), this protein is Sugar fermentation stimulation protein homolog.